We begin with the raw amino-acid sequence, 446 residues long: N-succinylarginine dihydrolase (446 aa).

Substrate contacts are provided by residues 19 to 28 (AGLSFGNVAS), asparagine 110, and 137 to 138 (HR). The active site involves glutamate 174. Arginine 213 is a substrate binding site. Residue histidine 249 is part of the active site. Substrate is bound by residues aspartate 251 and asparagine 364. Cysteine 370 serves as the catalytic Nucleophile.

It belongs to the succinylarginine dihydrolase family. As to quaternary structure, homodimer.

It carries out the reaction N(2)-succinyl-L-arginine + 2 H2O + 2 H(+) = N(2)-succinyl-L-ornithine + 2 NH4(+) + CO2. The protein operates within amino-acid degradation; L-arginine degradation via AST pathway; L-glutamate and succinate from L-arginine: step 2/5. Functionally, catalyzes the hydrolysis of N(2)-succinylarginine into N(2)-succinylornithine, ammonia and CO(2). In Burkholderia ambifaria (strain MC40-6), this protein is N-succinylarginine dihydrolase.